The primary structure comprises 211 residues: ATP phosphoribosyltransferase (211 aa).

It belongs to the ATP phosphoribosyltransferase family. Short subfamily. In terms of assembly, heteromultimer composed of HisG and HisZ subunits.

The protein resides in the cytoplasm. The catalysed reaction is 1-(5-phospho-beta-D-ribosyl)-ATP + diphosphate = 5-phospho-alpha-D-ribose 1-diphosphate + ATP. It functions in the pathway amino-acid biosynthesis; L-histidine biosynthesis; L-histidine from 5-phospho-alpha-D-ribose 1-diphosphate: step 1/9. Catalyzes the condensation of ATP and 5-phosphoribose 1-diphosphate to form N'-(5'-phosphoribosyl)-ATP (PR-ATP). Has a crucial role in the pathway because the rate of histidine biosynthesis seems to be controlled primarily by regulation of HisG enzymatic activity. This is ATP phosphoribosyltransferase from Bacillus cereus (strain AH187).